The following is a 299-amino-acid chain: Putative glycylpeptide N-tetradecanoyltransferase (299 aa).

It belongs to the NMT family.

The enzyme catalyses N-terminal glycyl-[protein] + tetradecanoyl-CoA = N-tetradecanoylglycyl-[protein] + CoA + H(+). In terms of biological role, adds a myristoyl group to the N-terminal glycine residue of certain proteins. This Amsacta moorei entomopoxvirus (AmEPV) protein is Putative glycylpeptide N-tetradecanoyltransferase.